Consider the following 432-residue polypeptide: Ribosomal protein uS12 methylthiotransferase RimO (432 aa).

One can recognise an MTTase N-terminal domain in the interval 2–115; the sequence is IRVAVITLGC…LPEIINRVLK (114 aa). [4Fe-4S] cluster is bound by residues cysteine 11, cysteine 47, cysteine 78, cysteine 151, cysteine 155, and cysteine 158. Residues 137-367 form the Radical SAM core domain; the sequence is EDGKPFAYLK…MLHQQSITRA (231 aa).

The protein belongs to the methylthiotransferase family. RimO subfamily. [4Fe-4S] cluster serves as cofactor.

The protein resides in the cytoplasm. It carries out the reaction L-aspartate(89)-[ribosomal protein uS12]-hydrogen + (sulfur carrier)-SH + AH2 + 2 S-adenosyl-L-methionine = 3-methylsulfanyl-L-aspartate(89)-[ribosomal protein uS12]-hydrogen + (sulfur carrier)-H + 5'-deoxyadenosine + L-methionine + A + S-adenosyl-L-homocysteine + 2 H(+). Its function is as follows. Catalyzes the methylthiolation of an aspartic acid residue of ribosomal protein uS12. This Moorella thermoacetica (strain ATCC 39073 / JCM 9320) protein is Ribosomal protein uS12 methylthiotransferase RimO.